A 597-amino-acid chain; its full sequence is Lysine--tRNA ligase (597 aa).

Mg(2+) is bound by residues E501 and E508.

It belongs to the class-II aminoacyl-tRNA synthetase family. Homodimer. Mg(2+) is required as a cofactor.

It localises to the cytoplasm. It catalyses the reaction tRNA(Lys) + L-lysine + ATP = L-lysyl-tRNA(Lys) + AMP + diphosphate. The sequence is that of Lysine--tRNA ligase (lysS) from Aquifex aeolicus (strain VF5).